The primary structure comprises 399 residues: Tryptophan synthase beta chain (399 aa).

Lys92 carries the N6-(pyridoxal phosphate)lysine modification.

It belongs to the TrpB family. Tetramer of two alpha and two beta chains. Requires pyridoxal 5'-phosphate as cofactor.

The catalysed reaction is (1S,2R)-1-C-(indol-3-yl)glycerol 3-phosphate + L-serine = D-glyceraldehyde 3-phosphate + L-tryptophan + H2O. Its pathway is amino-acid biosynthesis; L-tryptophan biosynthesis; L-tryptophan from chorismate: step 5/5. Its function is as follows. The beta subunit is responsible for the synthesis of L-tryptophan from indole and L-serine. The chain is Tryptophan synthase beta chain from Acidithiobacillus ferrooxidans (strain ATCC 23270 / DSM 14882 / CIP 104768 / NCIMB 8455) (Ferrobacillus ferrooxidans (strain ATCC 23270)).